The following is a 188-amino-acid chain: uncharacterized protein (188 aa).

Residues 1–18 (MTLRIIAHLLALTASLAG) form the signal peptide. Cys19 carries the N-palmitoyl cysteine lipid modification. A lipid anchor (S-diacylglycerol cysteine) is attached at Cys19.

The protein resides in the cell membrane. This is an uncharacterized protein from Sinorhizobium fredii (strain NBRC 101917 / NGR234).